We begin with the raw amino-acid sequence, 286 residues long: Nucleotide-binding protein PSPA7_5038 (286 aa).

8-15 lines the ATP pocket; that stretch reads GRSGSGKS. 60–63 is a GTP binding site; sequence DARN.

This sequence belongs to the RapZ-like family.

In terms of biological role, displays ATPase and GTPase activities. The chain is Nucleotide-binding protein PSPA7_5038 from Pseudomonas paraeruginosa (strain DSM 24068 / PA7) (Pseudomonas aeruginosa (strain PA7)).